A 313-amino-acid chain; its full sequence is D-alanine--D-alanine ligase (313 aa).

An ATP-grasp domain is found at 104–304; the sequence is KQALVPHGIP…YSDLVEAIIA (201 aa). Position 130–187 (130–187) interacts with ATP; that stretch reads PLPRPYVLKPVNEGSSVGVAIVTAEGNYGSPISAASKGPWQEFDQLLAEPFIRGRELT. Residues D255, E271, and N273 each coordinate Mg(2+).

The protein belongs to the D-alanine--D-alanine ligase family. Mg(2+) is required as a cofactor. Mn(2+) serves as cofactor.

Its subcellular location is the cytoplasm. The catalysed reaction is 2 D-alanine + ATP = D-alanyl-D-alanine + ADP + phosphate + H(+). It participates in cell wall biogenesis; peptidoglycan biosynthesis. Functionally, cell wall formation. The sequence is that of D-alanine--D-alanine ligase from Novosphingobium aromaticivorans (strain ATCC 700278 / DSM 12444 / CCUG 56034 / CIP 105152 / NBRC 16084 / F199).